The primary structure comprises 696 residues: UvrABC system protein B (696 aa).

Residues 45-434 enclose the Helicase ATP-binding domain; it reads EGIGDGLSYQ…DEVVEQVVRP (390 aa). 58-65 serves as a coordination point for ATP; that stretch reads GVTGSGKT. The short motif at 111 to 134 is the Beta-hairpin element; the sequence is YYDYYQPEAYVPQRDLFIEKDSSV. The Helicase C-terminal domain occupies 450 to 616; it reads QVDDLLSEIH…GVVKRIKDII (167 aa). A UVR domain is found at 647–682; it reads GKEIKRLEKQMLDHAKNLEFEKAAAVRDQLAKLKSQ.

The protein belongs to the UvrB family. As to quaternary structure, forms a heterotetramer with UvrA during the search for lesions. Interacts with UvrC in an incision complex.

The protein resides in the cytoplasm. Its function is as follows. The UvrABC repair system catalyzes the recognition and processing of DNA lesions. A damage recognition complex composed of 2 UvrA and 2 UvrB subunits scans DNA for abnormalities. Upon binding of the UvrA(2)B(2) complex to a putative damaged site, the DNA wraps around one UvrB monomer. DNA wrap is dependent on ATP binding by UvrB and probably causes local melting of the DNA helix, facilitating insertion of UvrB beta-hairpin between the DNA strands. Then UvrB probes one DNA strand for the presence of a lesion. If a lesion is found the UvrA subunits dissociate and the UvrB-DNA preincision complex is formed. This complex is subsequently bound by UvrC and the second UvrB is released. If no lesion is found, the DNA wraps around the other UvrB subunit that will check the other stand for damage. The sequence is that of UvrABC system protein B from Ralstonia nicotianae (strain ATCC BAA-1114 / GMI1000) (Ralstonia solanacearum).